Here is a 492-residue protein sequence, read N- to C-terminus: Protein nucleotidyltransferase YdiU (492 aa).

ATP is bound by residues Gly90, Gly92, Arg93, Lys113, Asp125, Gly126, Arg176, and Arg183. Asp252 functions as the Proton acceptor in the catalytic mechanism. Asn253 and Asp262 together coordinate Mg(2+). Asp262 contacts ATP.

It belongs to the SELO family. Requires Mg(2+) as cofactor. It depends on Mn(2+) as a cofactor.

It catalyses the reaction L-seryl-[protein] + ATP = 3-O-(5'-adenylyl)-L-seryl-[protein] + diphosphate. The enzyme catalyses L-threonyl-[protein] + ATP = 3-O-(5'-adenylyl)-L-threonyl-[protein] + diphosphate. The catalysed reaction is L-tyrosyl-[protein] + ATP = O-(5'-adenylyl)-L-tyrosyl-[protein] + diphosphate. It carries out the reaction L-histidyl-[protein] + UTP = N(tele)-(5'-uridylyl)-L-histidyl-[protein] + diphosphate. It catalyses the reaction L-seryl-[protein] + UTP = O-(5'-uridylyl)-L-seryl-[protein] + diphosphate. The enzyme catalyses L-tyrosyl-[protein] + UTP = O-(5'-uridylyl)-L-tyrosyl-[protein] + diphosphate. Nucleotidyltransferase involved in the post-translational modification of proteins. It can catalyze the addition of adenosine monophosphate (AMP) or uridine monophosphate (UMP) to a protein, resulting in modifications known as AMPylation and UMPylation. The sequence is that of Protein nucleotidyltransferase YdiU from Thioalkalivibrio sulfidiphilus (strain HL-EbGR7).